A 250-amino-acid chain; its full sequence is PF03932 family protein CutC (250 aa).

This sequence belongs to the CutC family.

The protein localises to the cytoplasm. This Proteus mirabilis (strain HI4320) protein is PF03932 family protein CutC.